Here is a 140-residue protein sequence, read N- to C-terminus: Large ribosomal subunit protein bL17 (140 aa).

The segment at 119–140 is disordered; sequence DTTAKGQDSGPVQVEEQENEEA.

It belongs to the bacterial ribosomal protein bL17 family. Part of the 50S ribosomal subunit. Contacts protein L32.

The sequence is that of Large ribosomal subunit protein bL17 from Zymomonas mobilis subsp. mobilis (strain ATCC 31821 / ZM4 / CP4).